A 150-amino-acid polypeptide reads, in one-letter code: Snaclec CTL-Eoc125 (150 aa).

An N-terminal signal peptide occupies residues 1–23 (MGRFISVSFGLLVVFLSLSGIGA). Cystine bridges form between Cys27/Cys38, Cys55/Cys144, and Cys121/Cys136. Positions 34-145 (YEGHCYKVFS…CSSTQQFICK (112 aa)) constitute a C-type lectin domain.

This sequence belongs to the snaclec family. As to quaternary structure, heterodimer; disulfide-linked. Expressed by the venom gland.

Its subcellular location is the secreted. In terms of biological role, interferes with one step of hemostasis (modulation of platelet aggregation, or coagulation cascade, for example). The chain is Snaclec CTL-Eoc125 from Echis ocellatus (Ocellated saw-scaled viper).